We begin with the raw amino-acid sequence, 295 residues long: Cyclin-G1 (295 aa).

This sequence belongs to the cyclin family. Cyclin G subfamily.

The protein localises to the nucleus. Functionally, may play a role in growth regulation. Is associated with G2/M phase arrest in response to DNA damage. May be an intermediate by which p53 mediates its role as an inhibitor of cellular proliferation. This is Cyclin-G1 (CCNG1) from Bos taurus (Bovine).